The chain runs to 551 residues: Glucans biosynthesis protein D (551 aa).

Positions 1-32 form a signal peptide, tat-type signal; sequence MNRRRFIKASLALAAACGTPGLATLFSRNAWA.

This sequence belongs to the OpgD/OpgG family. Post-translationally, predicted to be exported by the Tat system. The position of the signal peptide cleavage has not been experimentally proven.

It localises to the periplasm. Its pathway is glycan metabolism; osmoregulated periplasmic glucan (OPG) biosynthesis. In terms of biological role, probably involved in the control of the structural glucose backbone of osmoregulated periplasmic glucans (OPGs). The protein is Glucans biosynthesis protein D of Cronobacter sakazakii (strain ATCC BAA-894) (Enterobacter sakazakii).